The chain runs to 77 residues: Translation initiation factor IF-1, chloroplastic (77 aa).

Residues 1–71 (MKEQKWIHEG…TRGRIIYRLR (71 aa)) enclose the S1-like domain.

Belongs to the IF-1 family. Component of the 30S ribosomal translation pre-initiation complex which assembles on the 30S ribosome in the order IF-2 and IF-3, IF-1 and N-formylmethionyl-tRNA(fMet); mRNA recruitment can occur at any time during PIC assembly.

The protein localises to the plastid. Its subcellular location is the chloroplast. Its function is as follows. One of the essential components for the initiation of protein synthesis. Stabilizes the binding of IF-2 and IF-3 on the 30S subunit to which N-formylmethionyl-tRNA(fMet) subsequently binds. Helps modulate mRNA selection, yielding the 30S pre-initiation complex (PIC). Upon addition of the 50S ribosomal subunit IF-1, IF-2 and IF-3 are released leaving the mature 70S translation initiation complex. The sequence is that of Translation initiation factor IF-1, chloroplastic from Lactuca sativa (Garden lettuce).